A 474-amino-acid chain; its full sequence is ATP synthase subunit beta (474 aa).

151 to 158 (GGAGVGKT) serves as a coordination point for ATP.

This sequence belongs to the ATPase alpha/beta chains family. In terms of assembly, F-type ATPases have 2 components, CF(1) - the catalytic core - and CF(0) - the membrane proton channel. CF(1) has five subunits: alpha(3), beta(3), gamma(1), delta(1), epsilon(1). CF(0) has three main subunits: a(1), b(2) and c(9-12). The alpha and beta chains form an alternating ring which encloses part of the gamma chain. CF(1) is attached to CF(0) by a central stalk formed by the gamma and epsilon chains, while a peripheral stalk is formed by the delta and b chains.

It is found in the cell inner membrane. The catalysed reaction is ATP + H2O + 4 H(+)(in) = ADP + phosphate + 5 H(+)(out). In terms of biological role, produces ATP from ADP in the presence of a proton gradient across the membrane. The catalytic sites are hosted primarily by the beta subunits. The polypeptide is ATP synthase subunit beta (Paracoccus denitrificans (strain Pd 1222)).